The chain runs to 376 residues: MTNDVIALAQALIQRESVTPEDAGCQQMMNDRLQAVGFNIESLFFTDTLNTWARKGTQSPHFCFAGHTDVVPTGPEKNWQYPPFSGLVENGLLHGRGAADMKGSLAAMLVATERFVTKHPDHKGSISFLITSDEEGPFINGTTRVIDTLEARGEKIDMCLVGEPSSRDVLGDVVKNGRRGSLTGFLTVKGIQGHVAYPQLAQNPIHLTTPALTELSQTVWDHGNEYFPATSFQISNINGGTGAGNVIPGELEVQFNFRFSTEVTHTQLQQRVNAILQQHNLNYELSWIVNGQPFLTEHGPLVDATVKAIKSVTGLTTNLETTGGTSDGRFIAQTGAKVIELGPRNATIHKVDECVSTDDLIALCDIYEQILENLLT.

Residue histidine 67 participates in Zn(2+) binding. Aspartate 69 is a catalytic residue. Aspartate 100 lines the Zn(2+) pocket. The Proton acceptor role is filled by glutamate 134. Residues glutamate 135, glutamate 163, and histidine 349 each coordinate Zn(2+).

The protein belongs to the peptidase M20A family. DapE subfamily. Homodimer. Requires Zn(2+) as cofactor. The cofactor is Co(2+).

It catalyses the reaction N-succinyl-(2S,6S)-2,6-diaminopimelate + H2O = (2S,6S)-2,6-diaminopimelate + succinate. The protein operates within amino-acid biosynthesis; L-lysine biosynthesis via DAP pathway; LL-2,6-diaminopimelate from (S)-tetrahydrodipicolinate (succinylase route): step 3/3. Functionally, catalyzes the hydrolysis of N-succinyl-L,L-diaminopimelic acid (SDAP), forming succinate and LL-2,6-diaminopimelate (DAP), an intermediate involved in the bacterial biosynthesis of lysine and meso-diaminopimelic acid, an essential component of bacterial cell walls. The chain is Succinyl-diaminopimelate desuccinylase from Pseudoalteromonas translucida (strain TAC 125).